Reading from the N-terminus, the 424-residue chain is MSNYYYYYGGGRYDWLKTVEPTNFLKIGLPYQAHPLHLQHQATTTPPSILEKFKRADILLNEVKAEMDPLMLQPETEKKLYQILGSIDMFKGLRKKVEFTYNAQIVTNAWLKMYELLNTMNFNNTSQAFCNCELPGGFISAINHFNYTMMHYPTFNWVASSLYPSSETDALEDHYGLYQCNPDNWLMQSPLLKKNVDYNDGDVTIASNVKNLALRATQRLTPIHLYTADGGINVGHDYNKQEELNLKLHFGQALTGLLSLSKGGNMILKHYTLNHAFTLSLICVFSHFFEELYITKPTSSRPTNSETYIVGKNRLRLFTPKEEQILLKRLEFFNDTPLVDLSLYQNLLESIYFAVETIHLKQQIEFLNFGMKCYRHFYNKIKLLNEYLAPKKKIFQDRWRVLNKLYVLEKKHKLKLCAPQGSVA.

The 213-residue stretch at 104–316 folds into the Adrift-type SAM-dependent 2'-O-MTase domain; the sequence is QIVTNAWLKM…TYIVGKNRLR (213 aa). S-adenosyl-L-methionine contacts are provided by Gly136 and Asp229. The Proton acceptor role is filled by Lys269.

The protein localises to the virion. In African swine fever virus (strain Badajoz 1971 Vero-adapted) (Ba71V), this protein is Probable methyltransferase EP424R.